The chain runs to 336 residues: Holliday junction branch migration complex subunit RuvB (336 aa).

The large ATPase domain (RuvB-L) stretch occupies residues 4 to 184; it reads ADRLISAGAT…FGIVQRLEFY (181 aa). Residues I23, R24, G65, K68, T69, T70, 131–133, R174, Y184, and R221 contribute to the ATP site; that span reads EDY. Residue T69 participates in Mg(2+) binding. The tract at residues 185–255 is small ATPAse domain (RuvB-S); the sequence is QVPDLQHIVG…IAAQALDMLN (71 aa). The tract at residues 258–336 is head domain (RuvB-H); sequence AEGFDYMDRK…HFGITPPEMP (79 aa). DNA contacts are provided by R294, R313, and R318.

Belongs to the RuvB family. In terms of assembly, homohexamer. Forms an RuvA(8)-RuvB(12)-Holliday junction (HJ) complex. HJ DNA is sandwiched between 2 RuvA tetramers; dsDNA enters through RuvA and exits via RuvB. An RuvB hexamer assembles on each DNA strand where it exits the tetramer. Each RuvB hexamer is contacted by two RuvA subunits (via domain III) on 2 adjacent RuvB subunits; this complex drives branch migration. In the full resolvosome a probable DNA-RuvA(4)-RuvB(12)-RuvC(2) complex forms which resolves the HJ.

Its subcellular location is the cytoplasm. The catalysed reaction is ATP + H2O = ADP + phosphate + H(+). Functionally, the RuvA-RuvB-RuvC complex processes Holliday junction (HJ) DNA during genetic recombination and DNA repair, while the RuvA-RuvB complex plays an important role in the rescue of blocked DNA replication forks via replication fork reversal (RFR). RuvA specifically binds to HJ cruciform DNA, conferring on it an open structure. The RuvB hexamer acts as an ATP-dependent pump, pulling dsDNA into and through the RuvAB complex. RuvB forms 2 homohexamers on either side of HJ DNA bound by 1 or 2 RuvA tetramers; 4 subunits per hexamer contact DNA at a time. Coordinated motions by a converter formed by DNA-disengaged RuvB subunits stimulates ATP hydrolysis and nucleotide exchange. Immobilization of the converter enables RuvB to convert the ATP-contained energy into a lever motion, pulling 2 nucleotides of DNA out of the RuvA tetramer per ATP hydrolyzed, thus driving DNA branch migration. The RuvB motors rotate together with the DNA substrate, which together with the progressing nucleotide cycle form the mechanistic basis for DNA recombination by continuous HJ branch migration. Branch migration allows RuvC to scan DNA until it finds its consensus sequence, where it cleaves and resolves cruciform DNA. This is Holliday junction branch migration complex subunit RuvB from Salmonella arizonae (strain ATCC BAA-731 / CDC346-86 / RSK2980).